We begin with the raw amino-acid sequence, 337 residues long: DNA-directed RNA polymerase subunit alpha (337 aa).

Positions 1–233 are alpha N-terminal domain (alpha-NTD); sequence MVREKVKVST…NLFIPFLHVE (233 aa). The alpha C-terminal domain (alpha-CTD) stretch occupies residues 267-337; sequence LAFQYIFIDQ…IEKAFQKKID (71 aa).

It belongs to the RNA polymerase alpha chain family. In plastids the minimal PEP RNA polymerase catalytic core is composed of four subunits: alpha, beta, beta', and beta''. When a (nuclear-encoded) sigma factor is associated with the core the holoenzyme is formed, which can initiate transcription.

The protein resides in the plastid. Its subcellular location is the chloroplast. The catalysed reaction is RNA(n) + a ribonucleoside 5'-triphosphate = RNA(n+1) + diphosphate. Its function is as follows. DNA-dependent RNA polymerase catalyzes the transcription of DNA into RNA using the four ribonucleoside triphosphates as substrates. This chain is DNA-directed RNA polymerase subunit alpha, found in Arabis hirsuta (Hairy rock-cress).